A 130-amino-acid polypeptide reads, in one-letter code: UPF0102 protein Cthe_0758 (130 aa).

This sequence belongs to the UPF0102 family.

The polypeptide is UPF0102 protein Cthe_0758 (Acetivibrio thermocellus (strain ATCC 27405 / DSM 1237 / JCM 9322 / NBRC 103400 / NCIMB 10682 / NRRL B-4536 / VPI 7372) (Clostridium thermocellum)).